A 538-amino-acid polypeptide reads, in one-letter code: Telomerase Cajal body protein 1 (538 aa).

A disordered region spans residues 1–53; sequence MKTSEERLVVPDSLSSDQAPAPVPQGSPVDENTDSEPVPQPCGGDDRSQVAAD. Serine 27 and serine 87 each carry phosphoserine. The interval 92–128 is disordered; that stretch reads EQELSENVSLPVEDTNQPELASGEDVEGVSEEPGPVD. Residues 113–128 are compositionally biased toward acidic residues; that stretch reads SGEDVEGVSEEPGPVD. WD repeat units follow at residues 154-194, 210-255, 260-301, 311-352, 353-393, and 399-438; these read AHSE…YSAT, EGDT…LRAS, NHLD…RDCE, GQSG…ALLG, GHQG…HLLW, and VTTNQRIYFDLDPSGQFLVSGNTNGMVSVWDISGAFGDSS. Disordered regions lie at residues 471 to 491 and 509 to 538; these read QRMFPEPTNSGDEGEPEGDLP and CGGGPDPSSPNDPQDEKGQGRAEGCGDGLI. The residue at position 478 (threonine 478) is a Phosphothreonine. Serine 480 bears the Phosphoserine mark. Residues 529 to 538 are compositionally biased toward gly residues; the sequence is RAEGCGDGLI.

Belongs to the TCAB1 family. In terms of assembly, component of the telomerase holoenzyme complex composed of one molecule of TERT, one molecule of WRAP53/TCAB1, two molecules of H/ACA ribonucleoprotein complex subunits DKC1, NOP10, NHP2 and GAR1, and a telomerase RNA template component (TERC). The telomerase holoenzyme complex is associated with TEP1, SMG6/EST1A and POT1. Interacts with the chaperonin-containing T-complex (TRiC) complex; which mediates the folding of WRAP53/TCAB1. Interacts with COIL. Interacts with SMN1. Interacts with RNF8. Interacts with histone H2AX. As to expression, preferentially expressed in testis.

The protein resides in the nucleus. It is found in the cajal body. The protein localises to the chromosome. It localises to the telomere. Its function is as follows. RNA chaperone that plays a key role in telomere maintenance and RNA localization to Cajal bodies. Specifically recognizes and binds the Cajal body box (CAB box) present in both small Cajal body RNAs (scaRNAs) and telomerase RNA template component (TERC). Essential component of the telomerase holoenzyme complex, a ribonucleoprotein complex essential for the replication of chromosome termini that elongates telomeres in most eukaryotes. In the telomerase holoenzyme complex, required to stimulate the catalytic activity of the complex. Acts by specifically binding the CAB box of the TERC RNA and controlling the folding of the CR4/CR5 region of the TERC RNA, a critical step for telomerase activity. In addition, also controls telomerase holoenzyme complex localization to Cajal body. During S phase, required for delivery of TERC to telomeres during S phase and for telomerase activity. In addition to its role in telomere maintenance, also required for Cajal body formation, probably by mediating localization of scaRNAs to Cajal bodies. Also plays a role in DNA repair: relocalizes to sites of DNA double-strand breaks in response to DNA damage and promotes the repair of DNA double-strand breaks. Acts by recruiting the ubiquitin ligase RNF8 to DNA breaks and promote both homologous recombination (HR) and non-homologous end joining (NHEJ). The protein is Telomerase Cajal body protein 1 of Mesocricetus auratus (Golden hamster).